The chain runs to 447 residues: Beclin-1 (447 aa).

The short motif at 105-124 (TMENLSRRLKVTSNLFDIMS) is the BH3 element. The segment at 109 to 156 (LSRRLKVTSNLFDIMSGQTDIDHPLCEECTDTLLDHLDTQLNITENEC) is interaction with BCL2 and BCL2L1 isoform Bcl-X(L). Positions 140–214 (TLLDHLDTQL…VAKELDEGRN (75 aa)) form a coiled coil. The segment at 242-447 (DDLKSVDNQM…AWVSSQFYNR (206 aa)) is evolutionary conserved domain (ECD). Lys399 is covalently cross-linked (Glycyl lysine isopeptide (Lys-Gly) (interchain with G-Cter in ubiquitin)). Positions 422–447 (WTKALKFMLTNLKWGLAWVSSQFYNR) are required for membrane-association.

The protein belongs to the beclin family. Component of the PI3K (PI3KC3/PI3K-III/class III phosphatidylinositol 3-kinase) complex. Interacts with the poly-Gln domain of ATXN3; the interaction causes deubiquitination at Lys-399 and stabilizes BECN1. In terms of processing, polyubiquitinated at Lys-399 with 'Lys-48'-linkages. 'Lys-48'-linked polyubiquitination of Lys-399 leads to degradation. Deubiquitinated by ATXN3, leading to stabilization.

The protein resides in the cytoplasm. Its subcellular location is the golgi apparatus. It is found in the trans-Golgi network membrane. It localises to the endosome membrane. The protein localises to the endoplasmic reticulum membrane. The protein resides in the mitochondrion membrane. Its subcellular location is the endosome. It is found in the cytoplasmic vesicle. It localises to the autophagosome. Functionally, plays a central role in autophagy. Acts as a core subunit of different PI3K complex forms that mediate formation of phosphatidylinositol 3-phosphate and are believed to play a role in multiple membrane trafficking pathways: PI3KC3-C1 is involved in initiation of autophagosomes and PI3KC3-C2 in maturation of autophagosomes and endocytosis. Involved in regulation of degradative endocytic trafficking and required for the abscission step in cytokinesis, probably in the context of PI3KC3-C2. Essential for the formation of PI3KC3-C2 but not PI3KC3-C1 PI3K complex forms. Involved in endocytosis including endosome formation in neuronal cells. The protein is Beclin-1 (becn1) of Danio rerio (Zebrafish).